We begin with the raw amino-acid sequence, 363 residues long: Small ribosomal subunit biogenesis GTPase RsgA (363 aa).

A CP-type G domain is found at H112–L268. GTP contacts are provided by residues T157 to D160 and G210 to T218. 4 residues coordinate Zn(2+): C291, C296, H298, and C304. Positions R340–R363 are disordered.

It belongs to the TRAFAC class YlqF/YawG GTPase family. RsgA subfamily. Monomer. Associates with 30S ribosomal subunit, binds 16S rRNA. It depends on Zn(2+) as a cofactor.

Its subcellular location is the cytoplasm. Its function is as follows. One of several proteins that assist in the late maturation steps of the functional core of the 30S ribosomal subunit. Helps release RbfA from mature subunits. May play a role in the assembly of ribosomal proteins into the subunit. Circularly permuted GTPase that catalyzes slow GTP hydrolysis, GTPase activity is stimulated by the 30S ribosomal subunit. This chain is Small ribosomal subunit biogenesis GTPase RsgA, found in Xanthomonas campestris pv. campestris (strain 8004).